The primary structure comprises 446 residues: Bifunctional protein GlmU (446 aa).

The interval 1–228 (MTKTAAVILA…AEELLGVNSR (228 aa)) is pyrophosphorylase. UDP-N-acetyl-alpha-D-glucosamine is bound by residues 9-12 (LAAG), Lys23, Gln72, 77-78 (GT), 100-102 (YGD), Gly140, Glu154, Asn169, and Asn226. Asp102 lines the Mg(2+) pocket. Asn226 is a Mg(2+) binding site. Positions 229-249 (SELAAAEAVIQGRLREKAMEG) are linker. Positions 250–446 (GATLTAPETV…AHMRRLTGKN (197 aa)) are N-acetyltransferase. Positions 315 and 333 each coordinate UDP-N-acetyl-alpha-D-glucosamine. His345 functions as the Proton acceptor in the catalytic mechanism. 2 residues coordinate UDP-N-acetyl-alpha-D-glucosamine: Tyr348 and Asn359. Residues Ala362, 368 to 369 (NY), Ser387, Ala405, and Arg422 contribute to the acetyl-CoA site.

In the N-terminal section; belongs to the N-acetylglucosamine-1-phosphate uridyltransferase family. It in the C-terminal section; belongs to the transferase hexapeptide repeat family. In terms of assembly, homotrimer. Mg(2+) serves as cofactor.

It localises to the cytoplasm. It carries out the reaction alpha-D-glucosamine 1-phosphate + acetyl-CoA = N-acetyl-alpha-D-glucosamine 1-phosphate + CoA + H(+). The catalysed reaction is N-acetyl-alpha-D-glucosamine 1-phosphate + UTP + H(+) = UDP-N-acetyl-alpha-D-glucosamine + diphosphate. The protein operates within nucleotide-sugar biosynthesis; UDP-N-acetyl-alpha-D-glucosamine biosynthesis; N-acetyl-alpha-D-glucosamine 1-phosphate from alpha-D-glucosamine 6-phosphate (route II): step 2/2. It functions in the pathway nucleotide-sugar biosynthesis; UDP-N-acetyl-alpha-D-glucosamine biosynthesis; UDP-N-acetyl-alpha-D-glucosamine from N-acetyl-alpha-D-glucosamine 1-phosphate: step 1/1. It participates in bacterial outer membrane biogenesis; LPS lipid A biosynthesis. Functionally, catalyzes the last two sequential reactions in the de novo biosynthetic pathway for UDP-N-acetylglucosamine (UDP-GlcNAc). The C-terminal domain catalyzes the transfer of acetyl group from acetyl coenzyme A to glucosamine-1-phosphate (GlcN-1-P) to produce N-acetylglucosamine-1-phosphate (GlcNAc-1-P), which is converted into UDP-GlcNAc by the transfer of uridine 5-monophosphate (from uridine 5-triphosphate), a reaction catalyzed by the N-terminal domain. This chain is Bifunctional protein GlmU, found in Rhodospirillum rubrum (strain ATCC 11170 / ATH 1.1.1 / DSM 467 / LMG 4362 / NCIMB 8255 / S1).